Reading from the N-terminus, the 754-residue chain is Probable galactinol--sucrose galactosyltransferase 1 (754 aa).

This sequence belongs to the glycosyl hydrolases 36 family.

It carries out the reaction alpha-D-galactosyl-(1-&gt;3)-1D-myo-inositol + sucrose = raffinose + myo-inositol. Its function is as follows. Transglycosidase operating by a ping-pong reaction mechanism. Involved in the synthesis of raffinose, a major soluble carbohydrate in seeds, roots and tubers. In Arabidopsis thaliana (Mouse-ear cress), this protein is Probable galactinol--sucrose galactosyltransferase 1 (RFS1).